The chain runs to 301 residues: Probable alpha-L-glutamate ligase (301 aa).

Positions 104 to 287 (LQLLSRRGIG…VAGIIIEHIE (184 aa)) constitute an ATP-grasp domain. ATP is bound by residues Lys-141, 178–179 (EY), Asp-187, and 211–213 (RSN). Mg(2+)-binding residues include Asp-248, Glu-260, and Asn-262. Mn(2+) contacts are provided by Asp-248, Glu-260, and Asn-262.

The protein belongs to the RimK family. Mg(2+) serves as cofactor. Requires Mn(2+) as cofactor.

The chain is Probable alpha-L-glutamate ligase from Pseudomonas fluorescens (strain ATCC BAA-477 / NRRL B-23932 / Pf-5).